Here is a 175-residue protein sequence, read N- to C-terminus: NADH-quinone oxidoreductase subunit I (175 aa).

4Fe-4S ferredoxin-type domains are found at residues 69–98 (KRDE…IEAA) and 115–144 (KKFE…LDGP). Residues Cys-78, Cys-81, Cys-84, Cys-88, Cys-124, Cys-127, Cys-130, and Cys-134 each contribute to the [4Fe-4S] cluster site.

Belongs to the complex I 23 kDa subunit family. In terms of assembly, NDH-1 is composed of 14 different subunits. Subunits NuoA, H, J, K, L, M, N constitute the membrane sector of the complex. Requires [4Fe-4S] cluster as cofactor.

The protein resides in the cell inner membrane. It catalyses the reaction a quinone + NADH + 5 H(+)(in) = a quinol + NAD(+) + 4 H(+)(out). Its function is as follows. NDH-1 shuttles electrons from NADH, via FMN and iron-sulfur (Fe-S) centers, to quinones in the respiratory chain. The immediate electron acceptor for the enzyme in this species is believed to be ubiquinone. Couples the redox reaction to proton translocation (for every two electrons transferred, four hydrogen ions are translocated across the cytoplasmic membrane), and thus conserves the redox energy in a proton gradient. In Leptospira interrogans serogroup Icterohaemorrhagiae serovar Lai (strain 56601), this protein is NADH-quinone oxidoreductase subunit I.